The sequence spans 602 residues: MSSDSMRNIRNFSIIAHVDHGKSTLADRIIQLCGGLQAREMEAQVLDSNPIERERGITIKAQSVSLPYLAKDGQTYHLNFIDTPGHVDFSYEVSRSLAACEGALLVVDAAQGVEAQSVANCYTAVEQGLEVVPVINKIDLPTADIERAKAEIEAVIGIDAADAVPVSAKTGLNVQDVLEAIVHRIPPPKPRDTDKLQALIIDSWFDNYLGVVSLVRVMQGEIKAGDKLQVMSTGRNHQVDNVGVFTPKRKVLPALRAGEVGWVTASIKDVHGAPVGDTLTLAADPAPKPLPGFQEMQPRVFAGLFPVDAEDYPDLREALDKLRLNDAALRFEPESSEAMGFGFRCGFLGMLHMEIVQERLEREYNLDLISTAPTVVYEVLKTDGTIINMDNPAKLPPVNHVEEIREPIIRANVLTPEEYIGNIIKLCEEKRGSQIGINYLGSQVQISYELPMAEVVLDFFDKLKSVSRGYASLDYHFVRFDAGPFVRVDVLINGDKVDALSLIVHRSHADRRGRELCDKMKDLIPRQQFDVAIQAAVGSQIIARTTVKAMRKNVLAKCYGGDVSRKKKLLEKQKEGKKRMKQVGRVEIPQEAFLAVLQMDNK.

The 183-residue stretch at 7–189 folds into the tr-type G domain; that stretch reads RNIRNFSIIA…AIVHRIPPPK (183 aa). GTP-binding positions include 19-24 and 136-139; these read DHGKST and NKID.

This sequence belongs to the TRAFAC class translation factor GTPase superfamily. Classic translation factor GTPase family. LepA subfamily.

The protein resides in the cell inner membrane. It carries out the reaction GTP + H2O = GDP + phosphate + H(+). Required for accurate and efficient protein synthesis under certain stress conditions. May act as a fidelity factor of the translation reaction, by catalyzing a one-codon backward translocation of tRNAs on improperly translocated ribosomes. Back-translocation proceeds from a post-translocation (POST) complex to a pre-translocation (PRE) complex, thus giving elongation factor G a second chance to translocate the tRNAs correctly. Binds to ribosomes in a GTP-dependent manner. The sequence is that of Elongation factor 4 from Stenotrophomonas maltophilia (strain R551-3).